We begin with the raw amino-acid sequence, 158 residues long: MPELTHFDAAGQAHMVDVGGKQETKRIAVARGSIRMLPETFALIRDGNAKKGDVIGIARIAAIQGSKRTADLIPLCHPLALTRVKVDFELDETLPGVHCTVQVETLGRTGVEMEALTAVQVGLLTVYDMCKAVDRGMTITDVKVLEKHGGKSGDWVAG.

Substrate is bound by residues 75–77 (LCH) and 113–114 (ME). Aspartate 128 is an active-site residue.

Belongs to the MoaC family. As to quaternary structure, homohexamer; trimer of dimers.

It catalyses the reaction (8S)-3',8-cyclo-7,8-dihydroguanosine 5'-triphosphate = cyclic pyranopterin phosphate + diphosphate. Its pathway is cofactor biosynthesis; molybdopterin biosynthesis. Its function is as follows. Catalyzes the conversion of (8S)-3',8-cyclo-7,8-dihydroguanosine 5'-triphosphate to cyclic pyranopterin monophosphate (cPMP). The polypeptide is Cyclic pyranopterin monophosphate synthase (Paraburkholderia xenovorans (strain LB400)).